The following is a 352-amino-acid chain: Protein RecA (352 aa).

68 to 75 (GPESSGKT) provides a ligand contact to ATP.

Belongs to the RecA family.

The protein resides in the cytoplasm. Its function is as follows. Can catalyze the hydrolysis of ATP in the presence of single-stranded DNA, the ATP-dependent uptake of single-stranded DNA by duplex DNA, and the ATP-dependent hybridization of homologous single-stranded DNAs. It interacts with LexA causing its activation and leading to its autocatalytic cleavage. In Clostridium perfringens (strain ATCC 13124 / DSM 756 / JCM 1290 / NCIMB 6125 / NCTC 8237 / Type A), this protein is Protein RecA.